Reading from the N-terminus, the 352-residue chain is Isoflavone-7-O-methyltransferase 6 (352 aa).

Position 118–127 (118–127 (VLDPTLSGSY)) interacts with substrate. Gly196, Asp219, Asp239, Met240, and Lys253 together coordinate S-adenosyl-L-methionine. The Proton acceptor role is filled by His257.

The protein belongs to the class I-like SAM-binding methyltransferase superfamily. Cation-independent O-methyltransferase family. COMT subfamily. In terms of assembly, homodimer.

The enzyme catalyses a 7-hydroxyisoflavone + S-adenosyl-L-methionine = a 7-methoxyisoflavone + S-adenosyl-L-homocysteine + H(+). It functions in the pathway phytoalexin biosynthesis; medicarpin biosynthesis. Its function is as follows. Transfers a methyl group to 7-hydroxyls of the isoflavones daidzein, genistein and 6,7,4'-trihydroxyisoflavone. Can also methylate (+)6a-hydroxymaackiain with lower efficiency. In Medicago sativa (Alfalfa), this protein is Isoflavone-7-O-methyltransferase 6.